An 88-amino-acid polypeptide reads, in one-letter code: Small ribosomal subunit protein uS17 (88 aa).

The protein belongs to the universal ribosomal protein uS17 family. In terms of assembly, part of the 30S ribosomal subunit.

Functionally, one of the primary rRNA binding proteins, it binds specifically to the 5'-end of 16S ribosomal RNA. The chain is Small ribosomal subunit protein uS17 from Nitratidesulfovibrio vulgaris (strain DSM 19637 / Miyazaki F) (Desulfovibrio vulgaris).